Here is a 970-residue protein sequence, read N- to C-terminus: Sodium/calcium exchanger 1 (970 aa).

A signal peptide spans 1-32 (MLRLSLPPNVSMGFRLVALVALLFSHVDHITA). Topologically, residues 33-71 (DTEAETGGNETTECTGSYYCKKGVILPIWEPQDPSFGDK) are extracellular. The N-linked (GlcNAc...) asparagine glycan is linked to Asn-41. Residues 72–92 (IARATVYFVAMVYMFLGVSII) form a helical membrane-spanning segment. Topologically, residues 93–133 (ADRFMSSIEVITSQEKEITIKKPNGETTKTTVRIWNETVSN) are cytoplasmic. Residues 134 to 154 (LTLMALGSSAPEILLSVIEVC) traverse the membrane as a helical segment. An Alpha-1 repeat occupies 138 to 178 (ALGSSAPEILLSVIEVCGHNFTAGDLGPSTIVGSAAFNMFI). Residues 155–167 (GHNFTAGDLGPST) are Extracellular-facing. A glycan (N-linked (GlcNAc...) asparagine) is linked at Asn-157. A helical membrane pass occupies residues 168-188 (IVGSAAFNMFIIIALCVYVVP). Residues 189-201 (DGETRKIKHLRVF) are Cytoplasmic-facing. Residues 202–222 (FVTAAWSIFAYTWLYIILSVS) form a helical membrane-spanning segment. The Extracellular portion of the chain corresponds to 223-228 (SPGVVE). The helical transmembrane segment at 229 to 249 (VWEGLLTFFFFPICVVFAWVA) threads the bilayer. Topologically, residues 250–797 (DRRLLFYKYV…FVPPTEYWNG (548 aa)) are cytoplasmic. The interval 251–270 (RRLLFYKYVYKRYRAGKQRG) is putative calmodulin-binding region. Ser-282 and Ser-389 each carry phosphoserine. Calx-beta domains are found at residues 393 to 493 (VNME…VHLS) and 524 to 624 (ATIT…IEIG). Residues Glu-417, Asp-453, Asp-478, Asp-479, Ile-481, Glu-483, Glu-486, Asp-530, Asp-531, Asp-532, Glu-548, Asp-584, Asp-610, Glu-611, Glu-612, and Glu-715 each contribute to the Ca(2+) site. The chain crosses the membrane as a helical span at residues 798 to 818 (WACFIVSILMIGLLTAFIGDL). Residues 819–821 (ASH) are Extracellular-facing. The helical transmembrane segment at 822–842 (FGCTIGLKDSVTAVVFVALGT) threads the bilayer. One copy of the Alpha-2 repeat lies at 839–875 (ALGTSVPDTFASKVAATQDQYADASIGNVTGSNAVNV). Residues 843–871 (SVPDTFASKVAATQDQYADASIGNVTGSN) are Cytoplasmic-facing. A helical transmembrane segment spans residues 872–892 (AVNVFLGIGVAWSIAAIYHAA). Topologically, residues 893–903 (NGEQFKVSPGT) are extracellular. The helical transmembrane segment at 904-924 (LAFSVTLFTIFAFINVGVLLY) threads the bilayer. Over 925–941 (RRRPEIGGELGGPRTAK) the chain is Cytoplasmic. The chain crosses the membrane as a helical span at residues 942–962 (LLTSSLFVLLWLLYIFFSSLE). The Extracellular segment spans residues 963-970 (AYCHIKGF).

Belongs to the Ca(2+):cation antiporter (CaCA) (TC 2.A.19) family. SLC8 subfamily. Detected in heart, kidney and brain (at protein level).

It localises to the cell membrane. It catalyses the reaction Ca(2+)(in) + 3 Na(+)(out) = Ca(2+)(out) + 3 Na(+)(in). Its activity is regulated as follows. Activated by micromolar levels of Ca(2+). Its function is as follows. Mediates the exchange of one Ca(2+) ion against three to four Na(+) ions across the cell membrane, and thereby contributes to the regulation of cytoplasmic Ca(2+) levels and Ca(2+)-dependent cellular processes. Contributes to Ca(2+) transport during excitation-contraction coupling in muscle. In a first phase, voltage-gated channels mediate the rapid increase of cytoplasmic Ca(2+) levels due to release of Ca(2+) stores from the endoplasmic reticulum. SLC8A1 mediates the export of Ca(2+) from the cell during the next phase, so that cytoplasmic Ca(2+) levels rapidly return to baseline. Required for normal embryonic heart development and the onset of heart contractions. This chain is Sodium/calcium exchanger 1 (Slc8a1), found in Mus musculus (Mouse).